The following is a 60-amino-acid chain: UPF0434 protein ESA_02427 (60 aa).

It belongs to the UPF0434 family.

The chain is UPF0434 protein ESA_02427 from Cronobacter sakazakii (strain ATCC BAA-894) (Enterobacter sakazakii).